We begin with the raw amino-acid sequence, 517 residues long: MAFTHVCLWTLVAFVLTWTVFYLTNMKKKATDLADTVAEDQKDGAADVIIVGAGVGGSALAYALAKDGRRVHVIERDMREPERMMGEFMQPGGRLMLSKLGLQDCLEDIDAQKATGLAVYKDGKEADAPFPVDNNNFSYEPSARSFHNGRFVQQLRRKAFSLSNVRLEEGTVKSLLEEKGVVKGVTYKNKEGEETTALAPLTVVCDGCYSNLRRSLNDDNNAEIMSYIVGYISKNCRLEEPEKLHLILSKPSFTMVYQISSTDVRCGFEVLPENFPSIANGEMSTFMKNTIVPQVPPKLRKIFLKGIDEGAHIKVVPAKRMTSTLSKKKGVIVLGDAFNMRHPVVASGMMVLLSDILILRRLLQPLSNLGDANKVSEVINSFYDIRKPMSATVNTLGNAFSQVLIGSTDEAKEAMRQGVYDYLCSGGFRTSGMMALLGGMNPRPLSLVYHLCAITLSSIGQLLSPFPSPLRIWHSLKLFGLAMKMLVPNLKAEGVSQMLFPANAAAYHKSYMAATTL.

The next 2 membrane-spanning stretches (helical) occupy residues 3-23 and 45-65; these read FTHV…VFYL and AADV…YALA. FAD contacts are provided by residues 55-56, 75-76, R83, F88, R156, V172, D336, and M349; these read VG and ER. The chain crosses the membrane as a helical span at residues 447–467; it reads LVYHLCAITLSSIGQLLSPFP.

The protein belongs to the squalene monooxygenase family. Requires FAD as cofactor. In terms of tissue distribution, expressed in seedlings, leaves, stems, inflorescences and siliques.

It localises to the membrane. It catalyses the reaction squalene + reduced [NADPH--hemoprotein reductase] + O2 = (S)-2,3-epoxysqualene + oxidized [NADPH--hemoprotein reductase] + H2O + H(+). It functions in the pathway terpene metabolism; lanosterol biosynthesis; lanosterol from farnesyl diphosphate: step 2/3. Functionally, catalyzes the stereospecific oxidation of squalene to (S)-2,3-epoxysqualene, and is considered to be a rate-limiting enzyme in steroid biosynthesis. This is Squalene epoxidase 6 (SQE6) from Arabidopsis thaliana (Mouse-ear cress).